Reading from the N-terminus, the 143-residue chain is Flagellar assembly factor FliW (143 aa).

It belongs to the FliW family. Interacts with flagellin in a 1:1 complex. Two molecules interact with each CsrA dimer; cannot interact with both flagellin and CsrA simultaneously. Has a higher affinity for CsrA than for flagellin. Interacts directly with flagellin (hag), forms a 3-way complex of Hag, FliS and FliW in which Flis and FliW do not directly interact. Interaction with Hag may occur via the C-terminus of Hag.

Its subcellular location is the cytoplasm. In terms of biological role, acts as an anti-CsrA protein, binds CsrA and prevents it from repressing translation of its target genes, one of which is flagellin. Binds to flagellin (hag), which is implicated in polymerization, and participates in the assembly of the flagellum. An antagonist to translational regulator CsrA, it binds CsrA at an allosteric site and non-competitively inhibits CsrA binding to hag RNA. Partner switching by flagellin between FliW and CsrA provides a flagellar assembly checkpoint to tightly control the timing of flagellin synthesis. Flagellin binds to assembly factor FliW, freeing translation regulator CsrA to repress translation of the flagellin mRNA. When the flagellar hook is assembled flagellin is secreted, depleting intracellular flagellin, which frees FliW to interact with CsrA and inhibits CsrA binding to mRNA. This derepresses flagellin translation and provides protein for flagellar assembly. Once the flagellar filament is completed cytoplasmic flagellin levels rise and CsrA translation repression of flagellin reinitiates. Binds to CsrA and displaces it from hag mRNA. Binds to hag mRNA itself, but only at much higher concentrations than those required to displace CsrA. This Bacillus subtilis (strain 168) protein is Flagellar assembly factor FliW.